Here is an 859-residue protein sequence, read N- to C-terminus: Leucine--tRNA ligase (859 aa).

The 'HIGH' region motif lies at 42–52 (PYPSGRLHMGH). A 'KMSKS' region motif is present at residues 618–622 (KMSKS). Lys-621 is an ATP binding site.

It belongs to the class-I aminoacyl-tRNA synthetase family.

Its subcellular location is the cytoplasm. It carries out the reaction tRNA(Leu) + L-leucine + ATP = L-leucyl-tRNA(Leu) + AMP + diphosphate. The chain is Leucine--tRNA ligase from Shewanella baltica (strain OS185).